The primary structure comprises 750 residues: Methylmalonyl-CoA mutase, mitochondrial (750 aa).

The transit peptide at M1–L32 directs the protein to the mitochondrion. Q50 serves as a coordination point for malonyl-CoA. Residue K89 is modified to N6-acetyllysine. Malonyl-CoA-binding positions include Y96–M99 and T106–Y110. Residue K212 is modified to N6-acetyllysine. Malonyl-CoA contacts are provided by residues T216–Q218, R228, K255, H265, and R304–S306. The residue at position 335 (K335) is an N6-acetyllysine. K343 is modified (N6-succinyllysine). S481 is modified (phosphoserine). K595 is modified (N6-succinyllysine). The residue at position 602 (K602) is an N6-acetyllysine. The B12-binding domain maps to R614 to K746. H627 contacts adenosylcob(III)alamin.

Belongs to the methylmalonyl-CoA mutase family. As to quaternary structure, homodimer. Interacts (the apoenzyme form) with MMAA; the interaction is GTP dependent. Requires adenosylcob(III)alamin as cofactor.

It localises to the mitochondrion matrix. Its subcellular location is the mitochondrion. The protein localises to the cytoplasm. It catalyses the reaction (R)-methylmalonyl-CoA = succinyl-CoA. Its activity is regulated as follows. Inhibited by itaconyl-CoA, a metabolite that inactivates the coenzyme B12 cofactor. Its function is as follows. Catalyzes the reversible isomerization of methylmalonyl-CoA (MMCoA) (generated from branched-chain amino acid metabolism and degradation of dietary odd chain fatty acids and cholesterol) to succinyl-CoA (3-carboxypropionyl-CoA), a key intermediate of the tricarboxylic acid cycle. In Pongo abelii (Sumatran orangutan), this protein is Methylmalonyl-CoA mutase, mitochondrial (MMUT).